An 899-amino-acid chain; its full sequence is Pre-mRNA-splicing factor 6 (899 aa).

Positions 1–65 are disordered; sequence MERPSFLDQE…QSQPKDDEDD (65 aa). Positions 28–51 are enriched in basic and acidic residues; the sequence is TKEKQVVSNDDKGRRIPKRYRENL. HAT repeat units lie at residues 221 to 253, 255 to 287, 289 to 318, 319 to 350, 352 to 381, 383 to 414, 493 to 525, 545 to 578, 608 to 645, 648 to 680, 682 to 714, 751 to 783, and 819 to 851; these read EDLQ…LEEK, RKFS…LHES, VHYC…DLES, TTVN…FEAD, AQVI…LQSY, NAKM…RNNP, PHSK…ATES, NSDD…DTRQ, LQLD…FLRY, LNEE…IYHS, GNIE…IDEI, GNLD…LFKH, and AQYE…TYAR.

In terms of assembly, component of the U4/U6-U5 tri-snRNP complex composed of the U4, U6 and U5 snRNAs and at least PRP3, PRP4, PRP6, PRP8, PRP18, PRP31, PRP38, SNU13, SNU23, SNU66, SNU114, SPP381, SMB1, SMD1, SMD2, SMD3, SMX2, SMX3, LSM2, LSM3, LSM4, LSM5, LSM6, LSM7, LSM8, BRR2 and DIB1.

The protein localises to the nucleus. Participates in pre-mRNA splicing. Part of the U4/U5/U6 tri-snRNP complex, one of the building blocks of the spliceosome. This chain is Pre-mRNA-splicing factor 6 (PRP6), found in Saccharomyces cerevisiae (strain ATCC 204508 / S288c) (Baker's yeast).